The chain runs to 243 residues: Large ribosomal subunit protein uL2 (243 aa).

Residues 1–12 are compositionally biased toward basic residues; it reads MGRRIQGQRRGR. 2 disordered regions span residues 1 to 38 and 198 to 243; these read MGRRIQGQRRGRGTSTFRAPSHRYKAELSHKQSESDDT and VDHP…GSSE. 2 stretches are compositionally biased toward basic and acidic residues: residues 24 to 34 and 221 to 231; these read YKAELSHKQSE and PPGRKVGDIAS.

This sequence belongs to the universal ribosomal protein uL2 family. In terms of assembly, part of the 50S ribosomal subunit. Forms a bridge to the 30S subunit in the 70S ribosome.

One of the primary rRNA binding proteins. Required for association of the 30S and 50S subunits to form the 70S ribosome, for tRNA binding and peptide bond formation. It has been suggested to have peptidyltransferase activity; this is somewhat controversial. Makes several contacts with the 16S rRNA in the 70S ribosome. In Haloquadratum walsbyi (strain DSM 16790 / HBSQ001), this protein is Large ribosomal subunit protein uL2.